The primary structure comprises 129 residues: Mediator of RNA polymerase II transcription subunit 31-B (129 aa).

It belongs to the Mediator complex subunit 31 family. Component of the Mediator complex.

The protein resides in the nucleus. Functionally, component of the Mediator complex, a coactivator involved in the regulated transcription of nearly all RNA polymerase II-dependent genes. Mediator functions as a bridge to convey information from gene-specific regulatory proteins to the basal RNA polymerase II transcription machinery. Mediator is recruited to promoters by direct interactions with regulatory proteins and serves as a scaffold for the assembly of a functional preinitiation complex with RNA polymerase II and the general transcription factors. The protein is Mediator of RNA polymerase II transcription subunit 31-B (med31-b) of Xenopus laevis (African clawed frog).